Reading from the N-terminus, the 384-residue chain is Glucose-fructose oxidoreductase domain-containing protein 2 (384 aa).

The N-terminal stretch at 1 to 25 is a signal peptide; that stretch reads MMTLPGIGVFGTGNTARVLIQLLRA. The segment at 358–384 is disordered; sequence GEWESVELTNEETDSNQNLSEVIQHNL. Polar residues predominate over residues 372-384; it reads SNQNLSEVIQHNL.

The protein belongs to the Gfo/Idh/MocA family.

The protein resides in the secreted. Its subcellular location is the extracellular space. The protein localises to the extracellular matrix. In terms of biological role, promotes matrix assembly. This chain is Glucose-fructose oxidoreductase domain-containing protein 2 (gfod2), found in Xenopus laevis (African clawed frog).